A 261-amino-acid polypeptide reads, in one-letter code: Hydroxyethylthiazole kinase (261 aa).

Residue M40 coordinates substrate. 2 residues coordinate ATP: K116 and T162. G189 lines the substrate pocket.

The protein belongs to the Thz kinase family. Mg(2+) is required as a cofactor.

It carries out the reaction 5-(2-hydroxyethyl)-4-methylthiazole + ATP = 4-methyl-5-(2-phosphooxyethyl)-thiazole + ADP + H(+). Its pathway is cofactor biosynthesis; thiamine diphosphate biosynthesis; 4-methyl-5-(2-phosphoethyl)-thiazole from 5-(2-hydroxyethyl)-4-methylthiazole: step 1/1. Catalyzes the phosphorylation of the hydroxyl group of 4-methyl-5-beta-hydroxyethylthiazole (THZ). The chain is Hydroxyethylthiazole kinase from Methanosarcina mazei (strain ATCC BAA-159 / DSM 3647 / Goe1 / Go1 / JCM 11833 / OCM 88) (Methanosarcina frisia).